The primary structure comprises 412 residues: Phosphoglycerate kinase (412 aa).

Residues 24-26 (DLN), Arg44, 67-70 (HLGR), Arg126, and Arg170 contribute to the substrate site. Residues Lys220, Gly308, Glu339, and 368-371 (GGDS) each bind ATP.

The protein belongs to the phosphoglycerate kinase family. As to quaternary structure, monomer.

It localises to the cytoplasm. It carries out the reaction (2R)-3-phosphoglycerate + ATP = (2R)-3-phospho-glyceroyl phosphate + ADP. It participates in carbohydrate degradation; glycolysis; pyruvate from D-glyceraldehyde 3-phosphate: step 2/5. The polypeptide is Phosphoglycerate kinase (Mycobacteroides abscessus (strain ATCC 19977 / DSM 44196 / CCUG 20993 / CIP 104536 / JCM 13569 / NCTC 13031 / TMC 1543 / L948) (Mycobacterium abscessus)).